A 484-amino-acid chain; its full sequence is tRNA sulfurtransferase (484 aa).

A THUMP domain is found at 63–167 (QAFGERLACI…GDKLYMVTKR (105 aa)). ATP-binding positions include 185 to 186 (LI), Lys267, Gly289, and Gln298. The cysteines at positions 346 and 458 are disulfide-linked. The region spanning 406 to 484 (IDTNEVVIDI…GYHNVKVYRP (79 aa)) is the Rhodanese domain. Cys458 acts as the Cysteine persulfide intermediate in catalysis.

It belongs to the ThiI family.

The protein localises to the cytoplasm. The catalysed reaction is [ThiI sulfur-carrier protein]-S-sulfanyl-L-cysteine + a uridine in tRNA + 2 reduced [2Fe-2S]-[ferredoxin] + ATP + H(+) = [ThiI sulfur-carrier protein]-L-cysteine + a 4-thiouridine in tRNA + 2 oxidized [2Fe-2S]-[ferredoxin] + AMP + diphosphate. The enzyme catalyses [ThiS sulfur-carrier protein]-C-terminal Gly-Gly-AMP + S-sulfanyl-L-cysteinyl-[cysteine desulfurase] + AH2 = [ThiS sulfur-carrier protein]-C-terminal-Gly-aminoethanethioate + L-cysteinyl-[cysteine desulfurase] + A + AMP + 2 H(+). It participates in cofactor biosynthesis; thiamine diphosphate biosynthesis. Its function is as follows. Catalyzes the ATP-dependent transfer of a sulfur to tRNA to produce 4-thiouridine in position 8 of tRNAs, which functions as a near-UV photosensor. Also catalyzes the transfer of sulfur to the sulfur carrier protein ThiS, forming ThiS-thiocarboxylate. This is a step in the synthesis of thiazole, in the thiamine biosynthesis pathway. The sulfur is donated as persulfide by IscS. The chain is tRNA sulfurtransferase from Shewanella oneidensis (strain ATCC 700550 / JCM 31522 / CIP 106686 / LMG 19005 / NCIMB 14063 / MR-1).